Reading from the N-terminus, the 819-residue chain is Mitosis inhibitor protein kinase SWE1 (819 aa).

At S36 the chain carries Phosphoserine; by CDC5. The residue at position 45 (T45) is a Phosphothreonine; by CDC28. S56 and S63 each carry phosphoserine; by CDC28. The residue at position 70 (S70) is a Phosphoserine. Phosphothreonine; by CDC28 is present on T74. The tract at residues 86–105 (KIEEEEEEEEEGKDEESVDS) is disordered. Over residues 88–102 (EEEEEEEEEGKDEES) the composition is skewed to acidic residues. Phosphoserine; by CDC5 is present on S102. Position 105 is a phosphoserine; by CDC28 (S105). S111 bears the Phosphoserine; by CDC5, CDC28 and CLA4 mark. The interval 117–168 (ESVTTPITKRSAEKTNSPISLKQWNQRWFPKNDARTENTSSSSSYSVAKPNQ) is disordered. A Phosphoserine; by CDC5 modification is found at S118. The segment covering 118-142 (SVTTPITKRSAEKTNSPISLKQWNQ) has biased composition (polar residues). Phosphothreonine; by CDC28 occurs at positions 121 and 124. S127 carries the post-translational modification Phosphoserine; by CDC28. A Phosphothreonine; by CDC5 modification is found at T131. S133 carries the post-translational modification Phosphoserine; by CDC28. A Phosphoserine; by CDC28 and CLA4 modification is found at S136. Phosphoserine; by CDC5 is present on residues S156 and S169. T196 is modified (phosphothreonine; by CDC28). A Phosphoserine; by CDC28 modification is found at S201. Residues S225 and S254 each carry the phosphoserine; by CDC5 modification. Residue S262 is modified to Phosphoserine. 2 positions are modified to phosphoserine; by CDC28: S263 and S266. The segment at 278-297 (NQTNILSPTNSLVTNSSPQT) is disordered. T280 bears the Phosphothreonine; by CDC5 mark. 2 positions are modified to phosphoserine: S284 and S294. At S312 the chain carries Phosphoserine; by CLA4. Residues 341–395 (PIIISSHHSTRKNPQPYQFRGRYDNDTDEEISTPTRRKSIIGATSQTHRESRPLS) form a disordered region. S345 carries the post-translational modification Phosphoserine. 2 positions are modified to phosphothreonine; by CDC28: T367 and T373. Residue S379 is modified to Phosphoserine; by CDC5 and CLA4. T384 is modified (phosphothreonine; by CDC28). Phosphoserine; by CDC5 and CLA4 is present on residues S395 and S438. Residues 444–794 (FTNVHSIGKG…NQILQTEECL (351 aa)) form the Protein kinase domain. Residues 450–458 (IGKGQFSTV) and K473 each bind ATP. D579 serves as the catalytic Proton acceptor. The Mg(2+) site is built by N584 and D597. A Phosphoserine; by CDC5 modification is found at S610. T629 is subject to Phosphothreonine; by CDC5. T688 is subject to Phosphothreonine; by CDC5 and CLA4. Position 692 is a phosphothreonine (T692). Positions 707–716 (SNNAGTSTVH) are enriched in polar residues. Residues 707-736 (SNNAGTSTVHNNSNINNPNMNNGNDNNNVN) form a disordered region. Residues 717–736 (NNSNINNPNMNNGNDNNNVN) show a composition bias toward low complexity. Residue K741 forms a Glycyl lysine isopeptide (Lys-Gly) (interchain with G-Cter in ubiquitin) linkage.

This sequence belongs to the protein kinase superfamily. Ser/Thr protein kinase family. WEE1 subfamily. Interacts with CLB2-CDC28. Partial hyperphosphorylation of SWE1 by CLB2-CDC28 stabilizes the ternary complex of SWE1 and CLB2-CDC28 and stimulates kinase activity of SWE1 in a positive feedback loop, maintaining CLB2-CDC28 in the tyrosine-phosphorylated state. Fully hyperphosphorylated SWE1 dissociates from CLB2-CDC28. Interacts with HSL7, KCC4 and MET30. Post-translationally, ubiquitinated by the SCF(MET30) complex, leading to its degradation by the proteasome. In terms of processing, phosphorylated progressively by CLA4, CLB2-CDC28 and CDC5. CLA4-dependent phosphorylation occurs in late S phase, followed by phosphorylation by CLB2-CDC28 in early G2, when the levels of mitotic CLB2 increases. This phosphorylation is critical for triggering subsequent SWE1-CDC5 interaction and CDC5-dependent phosphorylation. The resulting cumulative hyperphosphorylation down-regulates SWE1 by targeting it for ubiquitin-mediated degradation. This stepwise phosphorylation is thought to be a mechanism to integrate the different checkpoint requirements before entry into mitosis.

It is found in the bud neck. The protein resides in the nucleus. The catalysed reaction is L-seryl-[protein] + ATP = O-phospho-L-seryl-[protein] + ADP + H(+). It carries out the reaction L-threonyl-[protein] + ATP = O-phospho-L-threonyl-[protein] + ADP + H(+). Protein kinase that acts as a negative regulator of entry into mitosis (G2 to M transition) by phosphorylating and inhibiting the mitosis-promoting cyclin B-bound CDC28 at 'Tyr-19'. SWE1-mediated inhibition of CDC28 acts in a cell size or morphogenesis checkpoint to delay mitosis in response to defects in growth, actin organization or bud formation. Inhibits the activity of B-type cyclins in replication initiation strongly for CLB2, moderately for CLB3 and CLB4, and there is no apparent inhibition for CLB5 and CLB6, correlating with the normal expression timing of those cyclins. Hyperphosphorylation and degradation of SWE1 when all checkpoint requirement are met releases CLB2-CDC28 from inhibition and allows for progression through the cell cycle. SWE1-dependent CDC28 phosphorylation is also required for pachytene arrest upon activation of the recombination checkpoint during meiosis. Also involved in the regulation of nitrogen starvation- and short chain alcohol-induced filamentous growth, or filamentous differentiation in response to slowed DNA synthesis. Can act both on serines and on tyrosines. In Saccharomyces cerevisiae (strain ATCC 204508 / S288c) (Baker's yeast), this protein is Mitosis inhibitor protein kinase SWE1 (SWE1).